The following is a 392-amino-acid chain: Formate-dependent phosphoribosylglycinamide formyltransferase (392 aa).

N(1)-(5-phospho-beta-D-ribosyl)glycinamide-binding positions include 22–23 (EL) and E82. Residues R114, K155, 160–165 (SSGKGQ), 195–198 (EKII), and E203 each bind ATP. Positions 119-308 (VLVSKKLNIL…EFALHVRSFL (190 aa)) constitute an ATP-grasp domain. Residues E267 and E279 each coordinate Mg(2+). Residues D286, K355, and 362 to 363 (RR) contribute to the N(1)-(5-phospho-beta-D-ribosyl)glycinamide site.

Belongs to the PurK/PurT family. Homodimer.

The catalysed reaction is N(1)-(5-phospho-beta-D-ribosyl)glycinamide + formate + ATP = N(2)-formyl-N(1)-(5-phospho-beta-D-ribosyl)glycinamide + ADP + phosphate + H(+). The protein operates within purine metabolism; IMP biosynthesis via de novo pathway; N(2)-formyl-N(1)-(5-phospho-D-ribosyl)glycinamide from N(1)-(5-phospho-D-ribosyl)glycinamide (formate route): step 1/1. Its function is as follows. Involved in the de novo purine biosynthesis. Catalyzes the transfer of formate to 5-phospho-ribosyl-glycinamide (GAR), producing 5-phospho-ribosyl-N-formylglycinamide (FGAR). Formate is provided by PurU via hydrolysis of 10-formyl-tetrahydrofolate. This chain is Formate-dependent phosphoribosylglycinamide formyltransferase, found in Wigglesworthia glossinidia brevipalpis.